We begin with the raw amino-acid sequence, 206 residues long: Lipid A acyltransferase PagP (206 aa).

A signal peptide spans 1–22; sequence MKQMVCWLTAGLLTLGGLPARA. The segment covering 26–46 has biased composition (low complexity); that stretch reads VPAVPETPAAPAAPAVQETPA. Residues 26 to 50 are disordered; it reads VPAVPETPAAPAAPAVQETPASSAA. Catalysis depends on residues histidine 80, aspartate 123, and serine 124.

Belongs to the lipid A palmitoyltransferase family. Homodimer.

It is found in the cell outer membrane. The catalysed reaction is a lipid A + a 1,2-diacyl-sn-glycero-3-phosphocholine = a hepta-acyl lipid A + a 2-acyl-sn-glycero-3-phosphocholine. The enzyme catalyses a lipid IVA + a 1,2-diacyl-sn-glycero-3-phosphocholine = a lipid IVB + a 2-acyl-sn-glycero-3-phosphocholine. It catalyses the reaction a lipid IIA + a 1,2-diacyl-sn-glycero-3-phosphocholine = a lipid IIB + a 2-acyl-sn-glycero-3-phosphocholine. Transfers a fatty acid residue from the sn-1 position of a phospholipid to the N-linked hydroxyfatty acid chain on the proximal unit of lipid A or its precursors. This is Lipid A acyltransferase PagP from Laribacter hongkongensis (strain HLHK9).